The following is a 165-amino-acid chain: MASTFSGDETAPFFGFLGAAAALVFSCMGAAYGTAKSGVGVASMGVMRPELVMKSIVPVVMAGVLGIYGLIIAVIISTGINPKAKSYYLFDGYAHLSSGLACGLAGLSAGMAIGIVGDAGVRANAQQPKLFVGMILILIFAEALALYGLIVGIILSSRAGQSRAE.

The Lumenal segment spans residues 1–12 (MASTFSGDETAP). A helical membrane pass occupies residues 13–33 (FFGFLGAAAALVFSCMGAAYG). Residues 34-55 (TAKSGVGVASMGVMRPELVMKS) lie on the Cytoplasmic side of the membrane. Residues 56–76 (IVPVVMAGVLGIYGLIIAVII) form a helical membrane-spanning segment. The Lumenal portion of the chain corresponds to 77–95 (STGINPKAKSYYLFDGYAH). A helical membrane pass occupies residues 96-117 (LSSGLACGLAGLSAGMAIGIVG). The Cytoplasmic portion of the chain corresponds to 118 to 129 (DAGVRANAQQPK). A helical membrane pass occupies residues 130-155 (LFVGMILILIFAEALALYGLIVGIIL). Topologically, residues 156–165 (SSRAGQSRAE) are lumenal.

The protein belongs to the V-ATPase proteolipid subunit family. In terms of assembly, V-ATPase is a heteromultimeric enzyme composed of a peripheral catalytic V1 complex (components A to H) attached to an integral membrane V0 proton pore complex (components: a, c, c'', d and e). The proteolipid components c and c'' are present as a hexameric ring that forms the proton-conducting pore. In terms of tissue distribution, expressed in leaf, root, flower and silique, with lower expression in roots.

The protein localises to the vacuole membrane. Its function is as follows. Proton-conducting pore forming subunit of the membrane integral V0 complex of vacuolar ATPase. V-ATPase is responsible for acidifying a variety of intracellular compartments in eukaryotic cells. The protein is V-type proton ATPase subunit c2 (VHA-c2) of Arabidopsis thaliana (Mouse-ear cress).